Consider the following 44-residue polypeptide: Cuticle protein CP459 (44 aa).

2 tandem repeats follow at residues 3 to 20 (LLKG…KRLL) and 27 to 44 (VLLT…NVQF).

Calcified shell.

The sequence is that of Cuticle protein CP459 from Cancer pagurus (Rock crab).